A 535-amino-acid polypeptide reads, in one-letter code: Ribonuclease Y (535 aa).

The helical transmembrane segment at isoleucine 30–isoleucine 50 threads the bilayer. A KH domain is found at threonine 225 to leucine 285. The 94-residue stretch at valine 351–glycine 444 folds into the HD domain.

The protein belongs to the RNase Y family.

Its subcellular location is the cell membrane. Its function is as follows. Endoribonuclease that initiates mRNA decay. The sequence is that of Ribonuclease Y from Roseiflexus sp. (strain RS-1).